We begin with the raw amino-acid sequence, 1883 residues long: Transmembrane protein 131 (1883 aa).

A signal peptide spans 1 to 22 (MGKRAGGGATGATTAAVSTSAG). The Lumenal portion of the chain corresponds to 23-1117 (AGLEPAAARS…AEALPRPNWE (1095 aa)). The tract at residues 109–283 (RFEPPMLDFH…ETKGVMRASF (175 aa)) is papD-L domain. N300 is a glycosylation site (N-linked (GlcNAc...) asparagine). S803 carries the phosphoserine modification. Residues 1118–1138 (LALYIIISGIMSALFLLVIGT) form a helical membrane-spanning segment. At 1139–1883 (AYLEAQGIWE…WSNSHFPHEN (745 aa)) the chain is on the cytoplasmic side. Disordered regions lie at residues 1198 to 1580 (GAGG…DSLY), 1593 to 1656 (LKQR…KNGN), 1670 to 1712 (PGGN…PVSN), 1766 to 1789 (WESP…HTAT), and 1832 to 1858 (MGTE…TYNP). Low complexity predominate over residues 1237 to 1261 (AKNSSSTSSRTSAQAASSQSANKTS). The segment covering 1302–1316 (PQPPLPPPVPQPQEP) has biased composition (pro residues). 2 positions are modified to phosphoserine: S1322 and S1342. 2 stretches are compositionally biased toward basic and acidic residues: residues 1330 to 1343 (SHPE…HSSE) and 1353 to 1364 (AMDKDFDHHDSP). At S1375 the chain carries Phosphoserine. Positions 1380–1394 (SKGKGKPLQRKVKPP) are enriched in basic residues. The span at 1395 to 1417 (KKQEEKEKKGKGKPQEDELKDSL) shows a compositional bias: basic and acidic residues. Positions 1423-1434 (SSTTTETSNPDT) are enriched in low complexity. The span at 1436-1458 (PLLKEDTEKQKGKQAMPEKHESE) shows a compositional bias: basic and acidic residues. Polar residues-rich tracts occupy residues 1510 to 1526 (AMTS…TKGT) and 1542 to 1553 (PNSQELGNTSSS). The span at 1602–1611 (PASPSPPAAP) shows a compositional bias: pro residues. The segment covering 1619–1630 (SYSSIVNSSSSS) has biased composition (low complexity). Over residues 1678-1690 (VSSNKTGFSSSLG) the composition is skewed to polar residues. Low complexity-rich tracts occupy residues 1773–1784 (PSPSWPASSGSP) and 1837–1849 (SPAP…SSPA). 2 positions are modified to phosphoserine: S1863 and S1871.

The protein belongs to the TMEM131 family. In terms of assembly, interacts (via PapD-L domain) with COL1A2 (via C-terminus); the interaction is direct, may occur with other collagen proteins, and is involved in assembly and TRAPPIII ER-to-Golgi transport complex-dependent secretion of collagen. Interacts (via C-terminus) with TRAPPC8 (via C-terminus); the interaction is direct.

It is found in the membrane. Its function is as follows. Collagen binding transmembrane protein involved in collagen secretion by recruiting the ER-to-Golgi transport complex TRAPPIII. May play a role in the immune response to viral infection. This chain is Transmembrane protein 131, found in Homo sapiens (Human).